Reading from the N-terminus, the 301-residue chain is Protein URE2 (301 aa).

The 85-residue stretch at 59–143 (DGYTLFSHRS…YLVSKYLRDN (85 aa)) folds into the GST N-terminal domain. The GST C-terminal domain maps to 152–301 (NIVEQSQISS…PAVIRALRGD (150 aa)).

It belongs to the GST superfamily. As to quaternary structure, homodimer.

Plays an important role in the cellular response to the nitrogen source. URE2 gene plays a major part in the repression of GLN1 and GDH2 genes by glutamine, and is required for the inactivation of glutamine synthetase. URE2 gene product may catalytically inactivate GLN3 in response to an increase in the intracellular concentration of glutamine. The chain is Protein URE2 (URE2) from Meyerozyma guilliermondii (strain ATCC 6260 / CBS 566 / DSM 6381 / JCM 1539 / NBRC 10279 / NRRL Y-324) (Yeast).